A 258-amino-acid polypeptide reads, in one-letter code: HLA class II histocompatibility antigen, DP beta 1 chain (258 aa).

An N-terminal signal peptide occupies residues 1–29 (MMVLQVSAAPRTVALTALLMVLLTSVVQG). The beta-1 stretch occupies residues 30 to 121 (RATPENYLFQ…LGGPMTLQRR (92 aa)). At 30–225 (RATPENYLFQ…KAQSDSARSK (196 aa)) the chain is on the extracellular side. 2 disulfide bridges follow: cysteine 44–cysteine 106 and cysteine 144–cysteine 200. Residue asparagine 48 is glycosylated (N-linked (GlcNAc...) asparagine). A beta-2 region spans residues 122 to 215 (VQPRVNVSPS…SLDSPVTVEW (94 aa)). The Ig-like C1-type domain maps to 124–212 (PRVNVSPSKK…EHTSLDSPVT (89 aa)). The tract at residues 216–225 (KAQSDSARSK) is connecting peptide. The chain crosses the membrane as a helical span at residues 226 to 246 (TLTGAGGFVLGLIICGVGIFM). Residues 247 to 258 (HRRSKKVQRGSA) lie on the Cytoplasmic side of the membrane.

The protein belongs to the MHC class II family. As to quaternary structure, heterodimer of an alpha and a beta subunit; also referred as MHC class II molecule. In the endoplasmic reticulum (ER) it forms a heterononamer; 3 MHC class II molecules bind to a CD74 homotrimer (also known as invariant chain or HLA class II histocompatibility antigen gamma chain). In the endosomal/lysosomal system; CD74 undergoes sequential degradation by various proteases; leaving a small fragment termed CLIP on each MHC class II molecule. MHC class II molecule interacts with HLA_DM, and HLA_DO in B-cells, in order to release CLIP and facilitate the binding of antigenic peptides.

The protein resides in the cell membrane. The protein localises to the endoplasmic reticulum membrane. It is found in the golgi apparatus. Its subcellular location is the trans-Golgi network membrane. It localises to the endosome membrane. The protein resides in the lysosome membrane. In terms of biological role, binds peptides derived from antigens that access the endocytic route of antigen presenting cells (APC) and presents them on the cell surface for recognition by the CD4 T-cells. The peptide binding cleft accommodates peptides of 10-30 residues. The peptides presented by MHC class II molecules are generated mostly by degradation of proteins that access the endocytic route, where they are processed by lysosomal proteases and other hydrolases. Exogenous antigens that have been endocytosed by the APC are thus readily available for presentation via MHC II molecules, and for this reason this antigen presentation pathway is usually referred to as exogenous. As membrane proteins on their way to degradation in lysosomes as part of their normal turn-over are also contained in the endosomal/lysosomal compartments, exogenous antigens must compete with those derived from endogenous components. Autophagy is also a source of endogenous peptides, autophagosomes constitutively fuse with MHC class II loading compartments. In addition to APCs, other cells of the gastrointestinal tract, such as epithelial cells, express MHC class II molecules and CD74 and act as APCs, which is an unusual trait of the GI tract. To produce a MHC class II molecule that presents an antigen, three MHC class II molecules (heterodimers of an alpha and a beta chain) associate with a CD74 trimer in the ER to form a heterononamer. Soon after the entry of this complex into the endosomal/lysosomal system where antigen processing occurs, CD74 undergoes a sequential degradation by various proteases, including CTSS and CTSL, leaving a small fragment termed CLIP (class-II-associated invariant chain peptide). The removal of CLIP is facilitated by HLA-DM via direct binding to the alpha-beta-CLIP complex so that CLIP is released. HLA-DM stabilizes MHC class II molecules until primary high affinity antigenic peptides are bound. The MHC II molecule bound to a peptide is then transported to the cell membrane surface. In B-cells, the interaction between HLA-DM and MHC class II molecules is regulated by HLA-DO. Primary dendritic cells (DCs) also to express HLA-DO. Lysosomal microenvironment has been implicated in the regulation of antigen loading into MHC II molecules, increased acidification produces increased proteolysis and efficient peptide loading. The polypeptide is HLA class II histocompatibility antigen, DP beta 1 chain (HLA-DPB1) (Homo sapiens (Human)).